A 65-amino-acid polypeptide reads, in one-letter code: 7 kDa A-type inclusion protein (65 aa).

Positions 1 to 20 (MSNQNIPQLSEYQTSVSQVA) are enriched in polar residues. The interval 1 to 31 (MSNQNIPQLSEYQTSVSQVAVTPPPKPETPQ) is disordered.

The sequence is that of 7 kDa A-type inclusion protein from Vaccinia virus (strain Copenhagen) (VACV).